Here is a 381-residue protein sequence, read N- to C-terminus: Cytochrome b (381 aa).

A run of 4 helical transmembrane segments spans residues 34–54 (FGSLLGLCLIIQIVTGLFLAM), 78–99 (WLIRNIHANGASLFFVCIYFHI), 114–134 (WNIGVILLFLLMATAFVGYVL), and 179–199 (FFAFHFLLPFLITALMIIHVL). Heme b is bound by residues His84 and His98. Positions 183 and 197 each coordinate heme b. His202 is a binding site for a ubiquinone. The next 4 membrane-spanning stretches (helical) occupy residues 227–247 (YKDALGFLTLLILLGVLALFL), 289–309 (LGGVLALLFSILILMLVPFLH), 321–341 (LTQIFFWTLVTNMLILTWIGG), and 348–368 (FILIGQIASISYFSLFLIALP).

The protein belongs to the cytochrome b family. As to quaternary structure, the cytochrome bc1 complex contains 3 respiratory subunits (MT-CYB, CYC1 and UQCRFS1), 2 core proteins (UQCRC1 and UQCRC2) and probably 6 low-molecular weight proteins. Heme b serves as cofactor.

Its subcellular location is the mitochondrion inner membrane. Its function is as follows. Component of the ubiquinol-cytochrome c reductase complex (complex III or cytochrome b-c1 complex) that is part of the mitochondrial respiratory chain. The b-c1 complex mediates electron transfer from ubiquinol to cytochrome c. Contributes to the generation of a proton gradient across the mitochondrial membrane that is then used for ATP synthesis. The protein is Cytochrome b (mt-cyb) of Isurus oxyrinchus (Shortfin mako shark).